We begin with the raw amino-acid sequence, 352 residues long: tRNA (guanine-N(1)-)-methyltransferase (352 aa).

S-adenosyl-L-methionine is bound by residues G109 and 129-134 (IGDYVL).

It belongs to the RNA methyltransferase TrmD family. Homodimer.

The protein resides in the cytoplasm. It catalyses the reaction guanosine(37) in tRNA + S-adenosyl-L-methionine = N(1)-methylguanosine(37) in tRNA + S-adenosyl-L-homocysteine + H(+). Functionally, specifically methylates guanosine-37 in various tRNAs. The chain is tRNA (guanine-N(1)-)-methyltransferase from Chlamydia trachomatis serovar A (strain ATCC VR-571B / DSM 19440 / HAR-13).